The primary structure comprises 74 residues: uncharacterized protein (74 aa).

This is an uncharacterized protein from Sinorhizobium fredii (strain NBRC 101917 / NGR234).